We begin with the raw amino-acid sequence, 277 residues long: MKQLYGVIGNPIGHSLSPVMHNDAFEHLNMDAHYHAFLVKEEVLGEAVRGLKALGISGFNVTTPHKVAIMDYLDEIDPLAKQIGAVNTVVHKDGKLIGYNTDGIGFVKALQSISSEPLQEKRILLLGAGGASRAIYFSLADVGVKEIDVANRTVDKAKELITACTATVHSVALSLEEATEEQENYDIIIQTTTIGMHPRVEHTPLQISSLKKGTIVSDIIYNPFETKILCEAKEQGAMIQNGIDMFVYQGALAFEMWTGRTPNIERMKQLVIRKLGG.

Shikimate-binding positions include 15–17 (SLS) and Thr62. The active-site Proton acceptor is the Lys66. Shikimate-binding residues include Asn87 and Asp102. Residues 127–131 (GAGGA), 151–156 (NRTVDK), and Ile219 each bind NADP(+). Shikimate is bound at residue Tyr221. Gly242 contacts NADP(+).

It belongs to the shikimate dehydrogenase family. In terms of assembly, homodimer.

The enzyme catalyses shikimate + NADP(+) = 3-dehydroshikimate + NADPH + H(+). The protein operates within metabolic intermediate biosynthesis; chorismate biosynthesis; chorismate from D-erythrose 4-phosphate and phosphoenolpyruvate: step 4/7. Its function is as follows. Involved in the biosynthesis of the chorismate, which leads to the biosynthesis of aromatic amino acids. Catalyzes the reversible NADPH linked reduction of 3-dehydroshikimate (DHSA) to yield shikimate (SA). The polypeptide is Shikimate dehydrogenase (NADP(+)) (Bacillus cereus (strain AH187)).